Consider the following 925-residue polypeptide: Calpain-B (925 aa).

The Calpain catalytic domain maps to 259-558 (MFEDPDFPAT…FDRVEICNLS (300 aa)). Residues cysteine 314, histidine 470, and asparagine 498 contribute to the active site. Residues 559-728 (PDSLTEDQQH…TRNNMEENDD (170 aa)) are domain III. The segment at 723 to 753 (MEENDDEVGFGETDDRIAPSLPPPTPKEEDD) is disordered. A linker region spans residues 729–748 (EVGFGETDDRIAPSLPPPTP). The tract at residues 749 to 925 (KEEDDPQRIA…DDWLERTIYS (177 aa)) is domain IV. 2 consecutive EF-hand domains span residues 796-831 (FSKD…IAKW) and 826-861 (TDIA…AGYH). Ca(2+) contacts are provided by aspartate 809, aspartate 811, serine 813, arginine 815, glutamate 820, aspartate 839, threonine 843, serine 845, and histidine 850.

This sequence belongs to the peptidase C2 family. In terms of processing, undergoes calcium-dependent autolytic cleavage between Asn-74 and Ala-75 and between Gln-224 and Asn-225 to produce two major products, calpain B catalytic subunit 1 and calpain B catalytic subunit 2. This autolysis is necessary for activation of the protein. In terms of tissue distribution, strongly expressed in follicular and border cells of the oocyte. Ubiquitously expressed in early embryos. Localized to the trachea and their orifices, and to the larynx of late embryos. Restricted to the salivary gland in third instar larvae.

The protein localises to the cytoplasm. It localises to the membrane. Its activity is regulated as follows. Activated by millimolar concentrations of calcium. In terms of biological role, calcium-regulated non-lysosomal thiol-protease. This Drosophila melanogaster (Fruit fly) protein is Calpain-B.